A 388-amino-acid chain; its full sequence is Xylose isomerase (388 aa).

Active-site residues include His54 and Asp57. Glu181, Glu217, His220, Asp245, Asp255, Asp257, and Asp287 together coordinate Mg(2+).

It belongs to the xylose isomerase family. Homotetramer. The cofactor is Mg(2+).

It localises to the cytoplasm. It carries out the reaction alpha-D-xylose = alpha-D-xylulofuranose. The sequence is that of Xylose isomerase from Streptomyces corchorusii (Streptomyces chibaensis).